The following is a 124-amino-acid chain: Small ribosomal subunit protein uS12 (124 aa).

Residue Asp-89 is modified to 3-methylthioaspartic acid.

It belongs to the universal ribosomal protein uS12 family. As to quaternary structure, part of the 30S ribosomal subunit. Contacts proteins S8 and S17. May interact with IF1 in the 30S initiation complex.

Functionally, with S4 and S5 plays an important role in translational accuracy. Its function is as follows. Interacts with and stabilizes bases of the 16S rRNA that are involved in tRNA selection in the A site and with the mRNA backbone. Located at the interface of the 30S and 50S subunits, it traverses the body of the 30S subunit contacting proteins on the other side and probably holding the rRNA structure together. The combined cluster of proteins S8, S12 and S17 appears to hold together the shoulder and platform of the 30S subunit. In Yersinia enterocolitica serotype O:8 / biotype 1B (strain NCTC 13174 / 8081), this protein is Small ribosomal subunit protein uS12.